The sequence spans 566 residues: OTU domain-containing protein 5 (566 aa).

2 disordered regions span residues 1–117 and 146–175; these read MTIL…GDAL and PGHS…GAGY. Positions 11–30 are enriched in pro residues; that stretch reads PPDADPANEPPPPGPLPPAP. Positions 32–47 are enriched in gly residues; that stretch reads RGGGVGVGGGGTGVGG. Pro residues predominate over residues 63–75; it reads ASPPPQGPLPGPP. Phosphoserine is present on Ser-64. Positions 84–97 are enriched in low complexity; that stretch reads AVPPGAVAGPRPQQ. Gly residues predominate over residues 105 to 115; sequence GPGGPGGGPGD. Ser-165 carries the phosphoserine modification. Tyr-175 is modified (phosphotyrosine). Position 177 is a phosphoserine (Ser-177). Thr-195 is modified (phosphothreonine). The OTU domain maps to 213-336; it reads FIIKQMKEDG…NIHYNSVVNP (124 aa). Residues 218–224 are cys-loop; it reads MKEDGAC. Residue Asp-221 is part of the active site. Cys-224 acts as the Nucleophile in catalysis. The variable-loop stretch occupies residues 273 to 283; it reads KRKNNCHGNHI. A Phosphoserine modification is found at Ser-323. The his-loop stretch occupies residues 324 to 329; that stretch reads YHRNIH. His-329 is an active-site residue. Residues Ser-332 and Ser-370 each carry the phosphoserine modification. The interval 413 to 497 is disordered; sequence ARQVRGPSQP…PGTSSQFSAG (85 aa). Low complexity-rich tracts occupy residues 425 to 438 and 445 to 457; these read ASAT…AASS and SRSP…ASSP. Residue Ser-447 is modified to Phosphoserine. Thr-502 carries the phosphothreonine modification. Ser-503 carries the post-translational modification Phosphoserine.

It belongs to the peptidase C85 family. As to quaternary structure, interacts with TRAF3. Phosphorylation at Ser-177 is required for deubiquitinating activity. Phosphorylation at Ser-323, Ser-332 and Ser-503 by MTOR promotes its activity.

Its subcellular location is the nucleus. The catalysed reaction is Thiol-dependent hydrolysis of ester, thioester, amide, peptide and isopeptide bonds formed by the C-terminal Gly of ubiquitin (a 76-residue protein attached to proteins as an intracellular targeting signal).. Inhibited by N-ethyl-maleimide (NEM). Deubiquitinating enzyme that functions as a negative regulator of the innate immune system. Has peptidase activity towards 'Lys-48'- and 'Lys-63'-linked polyubiquitin chains. Can also cleave 'Lys-11'-linked ubiquitin chains (in vitro). Acts via TRAF3 deubiquitination and subsequent suppression of type I interferon (IFN) production. Controls neuroectodermal differentiation through cleaving 'Lys-48'-linked ubiquitin chains to counteract degradation of select chromatin regulators such as ARID1A, HDAC2 and HCF1. Acts as a positive regulator of mTORC1 and mTORC2 signaling following phosphorylation by MTOR: acts by mediating deubiquitination of BTRC, leading to its stability. The sequence is that of OTU domain-containing protein 5 from Rattus norvegicus (Rat).